We begin with the raw amino-acid sequence, 485 residues long: Probable RNA-binding protein 46 (485 aa).

3 RRM domains span residues 61-139 (CEVF…VSLD), 141-223 (CRLF…WADP), and 236-308 (KVLY…LAKP).

In terms of assembly, interacts with YTHDC2, MEIOC, MOV10, CNOT6L, DDX4, UPF1 and PABPC1.

Its subcellular location is the cytoplasm. Functionally, essential for male and female fertility, playing a crucial role in regulating germ cell development by ensuring the proper progression of meiosis prophase I. Regulates mitotic-to-meiotic transition in spermatogenesis by forming a complex with MEIOC and YTHDC2 which recognizes and down-regulates mitotic transcripts for a successful meiotic entry. Required for normal synaptonemal complex formation during meiosis, binding meiotic cohesin subunit mRNAs containing GCCUAU/GUUCGA motifs in their 3'UTRs regions and positively regulating their translation. Required for spermatogonial differentiation in both developing and adult testis. In Macaca fascicularis (Crab-eating macaque), this protein is Probable RNA-binding protein 46 (RBM46).